Reading from the N-terminus, the 206-residue chain is MANVAVYNMEGKEVDKIELNDSIFGVEINEHLVHMAVLQQLANKRQGTQKAKTRSEVRGGGRKPWRQKGTGHARQGSTRSPQWTGGGVVFAPTPRDYSFKLNKKEKRAALKSALTSRVVENKFVVVDELKLDEIKTKKFVEVLKNLNVEKALVVLNDMDEKVIASAANIPTVKTTQTNELNVFDVLKYDTVVVTKAAVATIEEVYA.

The tract at residues 44–87 (KRQGTQKAKTRSEVRGGGRKPWRQKGTGHARQGSTRSPQWTGGG) is disordered. The span at 60-71 (GGRKPWRQKGTG) shows a compositional bias: basic residues.

Belongs to the universal ribosomal protein uL4 family. In terms of assembly, part of the 50S ribosomal subunit.

One of the primary rRNA binding proteins, this protein initially binds near the 5'-end of the 23S rRNA. It is important during the early stages of 50S assembly. It makes multiple contacts with different domains of the 23S rRNA in the assembled 50S subunit and ribosome. Its function is as follows. Forms part of the polypeptide exit tunnel. This is Large ribosomal subunit protein uL4 from Agathobacter rectalis (strain ATCC 33656 / DSM 3377 / JCM 17463 / KCTC 5835 / VPI 0990) (Eubacterium rectale).